The following is a 319-amino-acid chain: ATP-dependent 6-phosphofructokinase (319 aa).

Residue G11 coordinates ATP. Residue 21–25 coordinates ADP; the sequence is RAVVR. ATP-binding positions include 72–73 and 102–105; these read RC and GDGS. Mg(2+) is bound at residue D103. 125 to 127 contributes to the substrate binding site; that stretch reads TID. D127 (proton acceptor) is an active-site residue. ADP is bound at residue R154. Substrate-binding positions include R162 and 169 to 171; that span reads MGR. ADP contacts are provided by residues 185-187, R211, and 213-215; these read GAE and KKH. Substrate contacts are provided by residues E222, R243, and 249-252; that span reads HIQR.

It belongs to the phosphofructokinase type A (PFKA) family. ATP-dependent PFK group I subfamily. Prokaryotic clade 'B1' sub-subfamily. As to quaternary structure, homotetramer. The cofactor is Mg(2+).

Its subcellular location is the cytoplasm. It carries out the reaction beta-D-fructose 6-phosphate + ATP = beta-D-fructose 1,6-bisphosphate + ADP + H(+). Its pathway is carbohydrate degradation; glycolysis; D-glyceraldehyde 3-phosphate and glycerone phosphate from D-glucose: step 3/4. With respect to regulation, allosterically activated by ADP and other diphosphonucleosides, and allosterically inhibited by phosphoenolpyruvate. In terms of biological role, catalyzes the phosphorylation of D-fructose 6-phosphate to fructose 1,6-bisphosphate by ATP, the first committing step of glycolysis. This Bacillus pumilus (strain SAFR-032) protein is ATP-dependent 6-phosphofructokinase.